Here is a 257-residue protein sequence, read N- to C-terminus: Protein THYLAKOID ASSEMBLY 8-like, chloroplastic (257 aa).

A chloroplast-targeting transit peptide spans methionine 1 to serine 55. PPR repeat units follow at residues aspartate 142–proline 176 and aspartate 177–proline 211.

It belongs to the PPR family. P subfamily.

It is found in the plastid. Its subcellular location is the chloroplast. Its function is as follows. Binds weakly to specific single strand RNA (ssRNA). The polypeptide is Protein THYLAKOID ASSEMBLY 8-like, chloroplastic (Arabidopsis thaliana (Mouse-ear cress)).